The primary structure comprises 453 residues: Probable glycine dehydrogenase (decarboxylating) subunit 1 (453 aa).

Belongs to the GcvP family. N-terminal subunit subfamily. The glycine cleavage system is composed of four proteins: P, T, L and H. In this organism, the P 'protein' is a heterodimer of two subunits.

It carries out the reaction N(6)-[(R)-lipoyl]-L-lysyl-[glycine-cleavage complex H protein] + glycine + H(+) = N(6)-[(R)-S(8)-aminomethyldihydrolipoyl]-L-lysyl-[glycine-cleavage complex H protein] + CO2. In terms of biological role, the glycine cleavage system catalyzes the degradation of glycine. The P protein binds the alpha-amino group of glycine through its pyridoxal phosphate cofactor; CO(2) is released and the remaining methylamine moiety is then transferred to the lipoamide cofactor of the H protein. In Dictyoglomus thermophilum (strain ATCC 35947 / DSM 3960 / H-6-12), this protein is Probable glycine dehydrogenase (decarboxylating) subunit 1.